Here is a 135-residue protein sequence, read N- to C-terminus: Histone H3 (135 aa).

Positions 1-40 (MARTKQTARKSTGGKAPRKAVATKARKTAPPVGGVKKPHR) are disordered. Low complexity predominate over residues 19–31 (KAVATKARKTAPP).

It belongs to the histone H3 family. As to quaternary structure, the nucleosome is a histone octamer containing two molecules each of H2A, H2B, H3 and H4 assembled in one H3-H4 heterotetramer and two H2A-H2B heterodimers. The octamer wraps approximately 147 bp of DNA.

It is found in the nucleus. Its subcellular location is the chromosome. Its function is as follows. Core component of nucleosome. Nucleosomes wrap and compact DNA into chromatin, limiting DNA accessibility to the cellular machineries which require DNA as a template. Histones thereby play a central role in transcription regulation, DNA repair, DNA replication and chromosomal stability. DNA accessibility is regulated via a complex set of post-translational modifications of histones, also called histone code, and nucleosome remodeling. This chain is Histone H3, found in Mastigamoeba balamuthi (Phreatamoeba balamuthi).